The primary structure comprises 278 residues: Elongation factor Ts (278 aa).

An involved in Mg(2+) ion dislocation from EF-Tu region spans residues 81 to 84 (TDFV).

The protein belongs to the EF-Ts family.

It localises to the cytoplasm. Its function is as follows. Associates with the EF-Tu.GDP complex and induces the exchange of GDP to GTP. It remains bound to the aminoacyl-tRNA.EF-Tu.GTP complex up to the GTP hydrolysis stage on the ribosome. This Thermobifida fusca (strain YX) protein is Elongation factor Ts.